The primary structure comprises 573 residues: Proline--tRNA ligase (573 aa).

The protein belongs to the class-II aminoacyl-tRNA synthetase family. ProS type 1 subfamily. As to quaternary structure, homodimer.

It is found in the cytoplasm. The enzyme catalyses tRNA(Pro) + L-proline + ATP = L-prolyl-tRNA(Pro) + AMP + diphosphate. Functionally, catalyzes the attachment of proline to tRNA(Pro) in a two-step reaction: proline is first activated by ATP to form Pro-AMP and then transferred to the acceptor end of tRNA(Pro). As ProRS can inadvertently accommodate and process non-cognate amino acids such as alanine and cysteine, to avoid such errors it has two additional distinct editing activities against alanine. One activity is designated as 'pretransfer' editing and involves the tRNA(Pro)-independent hydrolysis of activated Ala-AMP. The other activity is designated 'posttransfer' editing and involves deacylation of mischarged Ala-tRNA(Pro). The misacylated Cys-tRNA(Pro) is not edited by ProRS. This Moorella thermoacetica (strain ATCC 39073 / JCM 9320) protein is Proline--tRNA ligase.